The primary structure comprises 126 residues: Probable prefoldin subunit 4 (126 aa).

This sequence belongs to the prefoldin subunit beta family. As to quaternary structure, heterohexamer of two PFD-alpha type and four PFD-beta type subunits.

Binds specifically to cytosolic chaperonin (c-CPN) and transfers target proteins to it. Binds to nascent polypeptide chain and promotes folding in an environment in which there are many competing pathways for nonnative proteins. Appears to play a non-essential role. In Caenorhabditis briggsae, this protein is Probable prefoldin subunit 4.